The primary structure comprises 2222 residues: Voltage-dependent R-type calcium channel subunit alpha-1E (2222 aa).

The Cytoplasmic segment spans residues 1-40 (MALYNPIPVRQNCFTVNRSLFIFGEDNIVRKYAKKLIDWP). Residues 27 to 305 (NIVRKYAKKL…LVLGVLSGEF (279 aa)) form an I repeat. A helical membrane pass occupies residues 41–59 (PFEYMILATIIANCIVLAL). The Extracellular portion of the chain corresponds to 60–78 (EQHLPEDDKTPMSRRLEKT). A helical transmembrane segment spans residues 79–97 (EPYFIGIFCFEAGIKIVAL). At 98–109 (GFIFHKGSYLRN) the chain is on the cytoplasmic side. A helical transmembrane segment spans residues 110-124 (GWNVMDFIVVLSGIL). At 125-136 (ATAGTHFNTHVD) the chain is on the extracellular side. A helical transmembrane segment spans residues 137-156 (LRTLRAVRVLRPLKLVSGIP). Topologically, residues 157 to 174 (SLQIVLKSIMKAMVPLLQ) are cytoplasmic. A helical membrane pass occupies residues 175-195 (IGLLLFFAILMFAIIGLEFYS). Residues 196 to 277 (GKLHRACFMN…NTNDALGATW (82 aa)) are Extracellular-facing. N-linked (GlcNAc...) asparagine glycosylation occurs at N205. A helical transmembrane segment spans residues 278 to 301 (NWLYFIPLIIIGSFFVLNLVLGVL). At 302–427 (SGEFAKERER…ISIRHMVKSQ (126 aa)) the chain is on the cytoplasmic side. A binding to the beta subunit region spans residues 325–342 (QQIERELNGYRAWIDKAE). D377 contacts Ca(2+). Residue S378 is modified to Phosphoserine. S379, E381, and C383 together coordinate Ca(2+). Position 391 is a phosphothreonine (T391). The II repeat unit spans residues 413 to 657 (ERLLRISIRH…VFLAIAVDNL (245 aa)). Residues 428-447 (VFYWIVLSVVALNTACVAIV) traverse the membrane as a helical segment. Over 448–460 (HHNQPQWLTHLLY) the chain is Extracellular. Residues 461–480 (YAEFLFLGLFLLEMSLKMYG) traverse the membrane as a helical segment. The Cytoplasmic portion of the chain corresponds to 481–489 (MGPRLYFHS). The chain crosses the membrane as a helical span at residues 490–508 (SFNCFDFGVTVGSIFEVVW). Topologically, residues 509 to 518 (AIFRPGTSFG) are extracellular. The helical transmembrane segment at 519-537 (ISVLRALRLLRIFKITKYW) threads the bilayer. Residues 538 to 556 (ASLRNLVVSLMSSMKSIIS) lie on the Cytoplasmic side of the membrane. A helical membrane pass occupies residues 557 to 576 (LLFLLFLFIVVFALLGMQLF). Topologically, residues 577–629 (GGRFNFNDGTPSANFDTFPAAIMTVFQILTGEDWNEVMYNGIRSQGGVSSGMW) are extracellular. Residues 630–654 (SAIYFIVLTLFGNYTLLNVFLAIAV) traverse the membrane as a helical segment. Topologically, residues 655-1100 (DNLANAQELT…TNPIRKACHY (446 aa)) are cytoplasmic. Residues 680 to 727 (LQKAKEVSPMSAPNMPSIERDRRRRHHMSMWEPRSSHLRERRRRHHMS) are disordered. S687, S696, S744, S766, and S806 each carry phosphoserine. 2 disordered regions span residues 820–944 (NQRS…VPRG) and 1042–1076 (NKTD…RETG). Residues 864-877 (RHRQSQRRSRHRRV) are compositionally biased toward basic residues. The segment covering 884-896 (SASASRSRSASQE) has biased composition (low complexity). Residue S898 is modified to Phosphoserine. 2 stretches are compositionally biased toward basic and acidic residues: residues 906–935 (DGEK…DLRR) and 1044–1055 (TDGEASPLKEAE). A Phosphoserine modification is found at S1049. Residues 1092-1378 (NPIRKACHYI…IFVALIIITF (287 aa)) form an III repeat. Residues 1101 to 1117 (IVNLRYFEMCILLVIAA) traverse the membrane as a helical segment. The Extracellular segment spans residues 1118–1141 (SSIALAAEDPVLTNSERNKVLRYF). Residues 1142-1161 (DYVFTGVFTFEMVIKMIDQG) form a helical membrane-spanning segment. Topologically, residues 1162 to 1169 (LILQDGSY) are cytoplasmic. The chain crosses the membrane as a helical span at residues 1170–1192 (FRDLWNILDFVVVVGALVAFALA). Residues 1193-1206 (NALGTNKGRDIKTI) are Extracellular-facing. Residues 1207 to 1224 (KSLRVLRVLRPLKTIKRL) form a helical membrane-spanning segment. The Cytoplasmic segment spans residues 1225–1243 (PKLKAVFDCVVTSLKNVFN). A helical membrane pass occupies residues 1244–1263 (ILIVYKLFMFIFAVIAVQLF). The Extracellular portion of the chain corresponds to 1264 to 1350 (KGKFFYCTDS…RGPSRSNRME (87 aa)). The helical transmembrane segment at 1351–1374 (MSIFYVVYFVVFPFFFVNIFVALI) threads the bilayer. The Cytoplasmic segment spans residues 1375–1431 (IITFQEQGDKMMEECSLEKNERACIDFAISAKPLTRYMPQNRHTFQYRVWHFVVSPS). One copy of the IV repeat lies at 1415 to 1678 (NRHTFQYRVW…LFVAVIMDNF (264 aa)). A helical membrane pass occupies residues 1432–1450 (FEYTIMAMIALNTVVLMMK). The Extracellular portion of the chain corresponds to 1451-1467 (YYSAPWTYELALKYLNI). A helical membrane pass occupies residues 1468-1485 (AFTMVFSLECVLKVIAFG). Over 1486–1493 (FLNYFRDT) the chain is Cytoplasmic. A helical membrane pass occupies residues 1494–1512 (WNIFDFITVIGSITEIILT). Over 1513 to 1523 (DSKLVNTSGFN) the chain is Extracellular. N-linked (GlcNAc...) asparagine glycans are attached at residues N1518 and N1523. Residues 1524–1542 (MSFLKLFRAARLIKLLRQG) traverse the membrane as a helical segment. Residues 1543–1561 (YTIRILLWTFVQSFKALPY) lie on the Cytoplasmic side of the membrane. Residues 1562–1581 (VCLLIAMLFFIYAIIGMQVF) traverse the membrane as a helical segment. Over 1582–1650 (GNIKLDEESH…NESERCGTDL (69 aa)) the chain is Extracellular. The N-linked (GlcNAc...) asparagine glycan is linked to N1641. The chain crosses the membrane as a helical span at residues 1651 to 1676 (AYVYFVSFIFFCSFLMLNLFVAVIMD). Residues 1677–2222 (NFEYLTRDSS…LSDTEEDDKC (546 aa)) lie on the Cytoplasmic side of the membrane. The EF-hand domain occupies 1691-1726 (HHLDEFVRVWAEYDRAACGRIHYTEMYEMLTLMSPP). Residues D1704, R1710, and E1715 each coordinate Ca(2+). The disordered stretch occupies residues 1970 to 2135 (SAHRLNSDSG…QQGQHPSPQH (166 aa)). The span at 1974–1994 (LNSDSGHKSDTHRSGGRERGR) shows a compositional bias: basic and acidic residues. Residues S2003 and S2022 each carry the phosphoserine modification. A compositionally biased stretch (basic and acidic residues) spans 2010–2027 (NSEERGTQADWESPERRQ). Residues 2046–2061 (SLSESSIPSISDTSTP) show a composition bias toward low complexity. Over residues 2104-2123 (LASQALESNSACLTESSNSL) the composition is skewed to polar residues. Low complexity predominate over residues 2124–2135 (HPQQGQHPSPQH).

Belongs to the calcium channel alpha-1 subunit (TC 1.A.1.11) family. CACNA1E subfamily. As to quaternary structure, interacts with EFHC1. Voltage-dependent calcium channels are multisubunit complexes, consisting of alpha-1, alpha-2, beta and delta subunits in a 1:1:1:1 ratio. The channel activity is directed by the pore-forming and voltage-sensitive alpha-1 subunit. In many cases, this subunit is sufficient to generate voltage-sensitive calcium channel activity. The auxiliary subunits beta and alpha-2/delta linked by a disulfide bridge regulate the channel activity. As to expression, expressed in central nervous system and in insulinoma.

Its subcellular location is the membrane. It carries out the reaction Ca(2+)(in) = Ca(2+)(out). Its function is as follows. Voltage-sensitive calcium channels (VSCC) mediate the entry of calcium ions into excitable cells and are also involved in a variety of calcium-dependent processes, including muscle contraction, hormone or neurotransmitter release, gene expression, cell motility, cell division and cell death. The isoform alpha-1E gives rise to R-type calcium currents. R-type calcium channels belong to the 'high-voltage activated' (HVA) group and are blocked by nickel. They are however insensitive to dihydropyridines (DHP). Calcium channels containing alpha-1E subunit could be involved in the modulation of firing patterns of neurons which is important for information processing. The polypeptide is Voltage-dependent R-type calcium channel subunit alpha-1E (Cacna1e) (Rattus norvegicus (Rat)).